A 398-amino-acid chain; its full sequence is Phosphoglycerate kinase (398 aa).

Substrate is bound by residues 21 to 23 (DFN), arginine 36, 59 to 62 (HLGR), arginine 119, and arginine 157. ATP-binding positions include lysine 208, glycine 296, glutamate 327, and 354–357 (GGDS).

It belongs to the phosphoglycerate kinase family. Monomer.

The protein localises to the cytoplasm. The enzyme catalyses (2R)-3-phosphoglycerate + ATP = (2R)-3-phospho-glyceroyl phosphate + ADP. It functions in the pathway carbohydrate degradation; glycolysis; pyruvate from D-glyceraldehyde 3-phosphate: step 2/5. The polypeptide is Phosphoglycerate kinase (pgk) (Lactococcus lactis subsp. lactis (strain IL1403) (Streptococcus lactis)).